A 334-amino-acid chain; its full sequence is MNEDPKVNLSGLPRDCIEAGTPENISAAVPSQGSVVESEPELVVNPWDIVLCSSGTLICCENAVVVLIIFHSPSLRAPMFLLIGSLALADLLAGLGLIINFVFAYLLQSEATKLVTIGLIVASFSASVCSLLAITVDRYLSLYYALTYHSERTVTFTYVMLVMLWGTSTCLGLLPVMGWNCLRDESTCSVVRPLTKNNAAILSISFLFMFALMLQLYIQICKIVMRHAHQIALQHHFLATSHYVTTRKGISTLALILGTFAACWMPFTLYSLIADYTYPSIYTYATLLPATYNSIINPVIYAFRNQEIQKALCLICCGCIPNTLSQRARSPSDV.

Over 1–48 (MNEDPKVNLSGLPRDCIEAGTPENISAAVPSQGSVVESEPELVVNPWD) the chain is Extracellular. Residues N8 and N24 are each glycosylated (N-linked (GlcNAc...) asparagine). The chain crosses the membrane as a helical span at residues 49-69 (IVLCSSGTLICCENAVVVLII). The Cytoplasmic segment spans residues 70-78 (FHSPSLRAP). A helical transmembrane segment spans residues 79 to 99 (MFLLIGSLALADLLAGLGLII). The Extracellular portion of the chain corresponds to 100-113 (NFVFAYLLQSEATK). The chain crosses the membrane as a helical span at residues 114-134 (LVTIGLIVASFSASVCSLLAI). Residues 135-158 (TVDRYLSLYYALTYHSERTVTFTY) are Cytoplasmic-facing. A helical transmembrane segment spans residues 159–179 (VMLVMLWGTSTCLGLLPVMGW). Residues 180-199 (NCLRDESTCSVVRPLTKNNA) are Extracellular-facing. The chain crosses the membrane as a helical span at residues 200-220 (AILSISFLFMFALMLQLYIQI). Residues 221–252 (CKIVMRHAHQIALQHHFLATSHYVTTRKGIST) are Cytoplasmic-facing. Residues 253–273 (LALILGTFAACWMPFTLYSLI) traverse the membrane as a helical segment. The Extracellular portion of the chain corresponds to 274–282 (ADYTYPSIY). Residues 283-303 (TYATLLPATYNSIINPVIYAF) traverse the membrane as a helical segment. Residues 304-334 (RNQEIQKALCLICCGCIPNTLSQRARSPSDV) lie on the Cytoplasmic side of the membrane. A lipid anchor (S-palmitoyl cysteine) is attached at C317. 2 positions are modified to phosphoserine: S330 and S332.

This sequence belongs to the G-protein coupled receptor 1 family. In terms of tissue distribution, expressed in the brain, pituitary gland and testis.

It localises to the cell membrane. In terms of biological role, receptor with constitutive G(s) signaling activity that activates cyclic AMP. Promotes neurite outgrowth and blocks myelin inhibition in neurons. In Rattus norvegicus (Rat), this protein is G-protein coupled receptor 12 (Gpr12).